Consider the following 601-residue polypeptide: Elongation factor 4 (601 aa).

Residues 5 to 187 enclose the tr-type G domain; it reads SNIRNFSIIA…AIVERLPAPE (183 aa). Residues 17–22 and 134–137 contribute to the GTP site; these read DHGKST and NKID.

Belongs to the TRAFAC class translation factor GTPase superfamily. Classic translation factor GTPase family. LepA subfamily.

It localises to the cell inner membrane. It carries out the reaction GTP + H2O = GDP + phosphate + H(+). Its function is as follows. Required for accurate and efficient protein synthesis under certain stress conditions. May act as a fidelity factor of the translation reaction, by catalyzing a one-codon backward translocation of tRNAs on improperly translocated ribosomes. Back-translocation proceeds from a post-translocation (POST) complex to a pre-translocation (PRE) complex, thus giving elongation factor G a second chance to translocate the tRNAs correctly. Binds to ribosomes in a GTP-dependent manner. This Oleidesulfovibrio alaskensis (strain ATCC BAA-1058 / DSM 17464 / G20) (Desulfovibrio alaskensis) protein is Elongation factor 4.